The sequence spans 129 residues: UPF0047 protein Mb2586c (129 aa).

This sequence belongs to the UPF0047 family.

The protein is UPF0047 protein Mb2586c of Mycobacterium bovis (strain ATCC BAA-935 / AF2122/97).